Reading from the N-terminus, the 415-residue chain is Gamma-glutamyl phosphate reductase (415 aa).

It belongs to the gamma-glutamyl phosphate reductase family.

The protein localises to the cytoplasm. It catalyses the reaction L-glutamate 5-semialdehyde + phosphate + NADP(+) = L-glutamyl 5-phosphate + NADPH + H(+). Its pathway is amino-acid biosynthesis; L-proline biosynthesis; L-glutamate 5-semialdehyde from L-glutamate: step 2/2. Catalyzes the NADPH-dependent reduction of L-glutamate 5-phosphate into L-glutamate 5-semialdehyde and phosphate. The product spontaneously undergoes cyclization to form 1-pyrroline-5-carboxylate. The chain is Gamma-glutamyl phosphate reductase from Leuconostoc citreum (strain KM20).